A 424-amino-acid polypeptide reads, in one-letter code: ATP-dependent RNA helicase WM6 (424 aa).

The segment covering 1-16 has biased composition (acidic residues); the sequence is MADNDDLLDYEDEEQT. The interval 1 to 27 is disordered; it reads MADNDDLLDYEDEEQTETTAVENQEAP. The short motif at 41-69 is the Q motif element; that stretch reads SGFRDFLLKPEILRAIVDCGFEHPSEVQH. A Helicase ATP-binding domain is found at 72–246; the sequence is IPQAVLGMDI…KKFMQDPMEV (175 aa). Residue 85–92 participates in ATP binding; sequence AKSGMGKT. The DECD box motif lies at 193–196; it reads DECD. The 162-residue stretch at 258–419 folds into the Helicase C-terminal domain; the sequence is GLQQHYVNLK…ELPEEIDLST (162 aa).

Belongs to the DEAD box helicase family. DECD subfamily. As to quaternary structure, component of the spliceosome. Interacts with the exon junction complex.

It is found in the nucleus speckle. The catalysed reaction is ATP + H2O = ADP + phosphate + H(+). In terms of biological role, required for mRNA export out of the nucleus. Probable RNA helicase that may regulate entry into mitosis by down-regulating the expression of other genes whose activity may be rate-limiting for entry into mitosis during embryogenesis. Binds to salivary gland chromosomes and modifies position effect variegation. Promotes an open chromatin structure that favors transcription during development by regulating the spread of heterochromatin. The sequence is that of ATP-dependent RNA helicase WM6 (Hel25E) from Drosophila melanogaster (Fruit fly).